The chain runs to 415 residues: Multidrug resistance protein MdtA (415 aa).

Residues methionine 1–alanine 21 form the signal peptide. Disordered stretches follow at residues serine 32 to alanine 56 and glutamate 392 to serine 415. The segment covering serine 399 to serine 415 has biased composition (basic and acidic residues).

Belongs to the membrane fusion protein (MFP) (TC 8.A.1) family. In terms of assembly, part of a tripartite efflux system composed of MdtA, MdtB and MdtC.

The protein resides in the cell inner membrane. Functionally, the MdtABC tripartite complex confers resistance against novobiocin and deoxycholate. This is Multidrug resistance protein MdtA from Escherichia coli O7:K1 (strain IAI39 / ExPEC).